The following is a 602-amino-acid chain: Phosphoenolpyruvate carboxykinase [GTP] (602 aa).

Residues arginine 89 and 211–213 (YAG) contribute to the substrate site. Residues lysine 220 and histidine 239 each contribute to the Mn(2+) site. Serine 260 is a substrate binding site. 261 to 266 (GSGKTS) contacts GTP. Serine 262 is a catalytic residue. Aspartate 277 is a binding site for Mn(2+). 367–369 (NAR) contributes to the substrate binding site. Positions 369 and 400 each coordinate GTP.

The protein belongs to the phosphoenolpyruvate carboxykinase [GTP] family. Mn(2+) is required as a cofactor.

Its subcellular location is the cytoplasm. The catalysed reaction is oxaloacetate + GTP = phosphoenolpyruvate + GDP + CO2. Its pathway is carbohydrate biosynthesis; gluconeogenesis. Functionally, catalyzes the conversion of oxaloacetate (OAA) to phosphoenolpyruvate (PEP), the rate-limiting step in the metabolic pathway that produces glucose from lactate and other precursors derived from the citric acid cycle. The sequence is that of Phosphoenolpyruvate carboxykinase [GTP] from Sulfurisphaera tokodaii (strain DSM 16993 / JCM 10545 / NBRC 100140 / 7) (Sulfolobus tokodaii).